Here is a 423-residue protein sequence, read N- to C-terminus: MILIKNGHIVDPQNNLNDKFDILIEKGEIKKIEKNIQPFAGCEVIDAEGKIITPSFTDIHVHFRDPGQTYKEDIESGSKAAVAGGYTTVVCMPNTIPAIDDVPIVRYIIEKGEEIGLCRVLPSAAITKGRKGKELTEMALLKDAGAVYFTDDGAPVMDSFIMRKAMEYAGSLGTFVADHCEDLNLSQNGVAHEGEIAAALGLPPLPPEAEDTMVARDCILSIQTGMPVHICHISTKLSVEIVAWAKAMGAKVTAEVTPHHLYLTDEEFLDFSCIAKVSPPLRTHEDIEATRWALASGIIDFVATDHAPHAHYEKMQELQACPPGMLGLQFALPIVLELVKKDYFDLNRMVEVMSIQPAKKIGLKPPQIKEGEIAELTIFDPFETWEVNKETILSKSKNTPLLGRKLTGKVKYTFFKGKIVYRD.

Residues His60 and His62 each contribute to the Zn(2+) site. Substrate-binding positions include 62–64 and Asn94; that span reads HFR. Positions 152, 179, 232, and 305 each coordinate Zn(2+). Residue Asp305 is part of the active site. Substrate-binding positions include His309 and 323 to 324; that span reads PG.

Belongs to the metallo-dependent hydrolases superfamily. DHOase family. Class I DHOase subfamily. Zn(2+) serves as cofactor.

It catalyses the reaction (S)-dihydroorotate + H2O = N-carbamoyl-L-aspartate + H(+). It functions in the pathway pyrimidine metabolism; UMP biosynthesis via de novo pathway; (S)-dihydroorotate from bicarbonate: step 3/3. In terms of biological role, catalyzes the reversible cyclization of carbamoyl aspartate to dihydroorotate. The chain is Dihydroorotase from Sulfurihydrogenibium sp. (strain YO3AOP1).